The primary structure comprises 263 residues: 5'-nucleotidase SurE (263 aa).

4 residues coordinate a divalent metal cation: Asp8, Asp9, Ser40, and Asn93.

It belongs to the SurE nucleotidase family. Requires a divalent metal cation as cofactor.

It is found in the cytoplasm. It carries out the reaction a ribonucleoside 5'-phosphate + H2O = a ribonucleoside + phosphate. In terms of biological role, nucleotidase that shows phosphatase activity on nucleoside 5'-monophosphates. The polypeptide is 5'-nucleotidase SurE (Caulobacter vibrioides (strain ATCC 19089 / CIP 103742 / CB 15) (Caulobacter crescentus)).